A 69-amino-acid polypeptide reads, in one-letter code: MIYKVYYQENANEIPVRENTKSLYLEAASEREVRQKLKDRNYNIEFVQLLEGNYLEYEQASPNFVLEEI.

It belongs to the RNA polymerase subunit epsilon family. RNAP is composed of a core of 2 alpha, a beta and a beta' subunit. The core is associated with a delta subunit, and at least one of epsilon or omega. When a sigma factor is associated with the core the holoenzyme is formed, which can initiate transcription.

The catalysed reaction is RNA(n) + a ribonucleoside 5'-triphosphate = RNA(n+1) + diphosphate. In terms of biological role, a non-essential component of RNA polymerase (RNAP). This is DNA-directed RNA polymerase subunit epsilon from Lysinibacillus sphaericus (strain C3-41).